The primary structure comprises 828 residues: Phenylalanine--tRNA ligase beta subunit (828 aa).

The tRNA-binding domain occupies 43 to 161 (LSKNTNLVVG…DQIALGSNAL (119 aa)). The tract at residues 203–230 (KKKEKKTINYKTKNSKDQTNRKTTPKLN) is disordered. The region spanning 436–519 (RTNPTISLDL…RFYGCHKLPP (84 aa)) is the B5 domain. The Mg(2+) site is built by D497, D503, and D507. Positions 736–828 (PKFPTVIRDL…LIKHFRIEIR (93 aa)) constitute an FDX-ACB domain.

Belongs to the phenylalanyl-tRNA synthetase beta subunit family. Type 1 subfamily. As to quaternary structure, tetramer of two alpha and two beta subunits. Mg(2+) is required as a cofactor.

It localises to the cytoplasm. The catalysed reaction is tRNA(Phe) + L-phenylalanine + ATP = L-phenylalanyl-tRNA(Phe) + AMP + diphosphate + H(+). The chain is Phenylalanine--tRNA ligase beta subunit from Aster yellows witches'-broom phytoplasma (strain AYWB).